A 345-amino-acid polypeptide reads, in one-letter code: Methylthioribose-1-phosphate isomerase (345 aa).

Residues 47-49, R90, and Q197 contribute to the substrate site; that span reads RGA. The active-site Proton donor is the D238. Residue 248 to 249 participates in substrate binding; it reads NK.

This sequence belongs to the eIF-2B alpha/beta/delta subunits family. MtnA subfamily.

It carries out the reaction 5-(methylsulfanyl)-alpha-D-ribose 1-phosphate = 5-(methylsulfanyl)-D-ribulose 1-phosphate. It participates in amino-acid biosynthesis; L-methionine biosynthesis via salvage pathway; L-methionine from S-methyl-5-thio-alpha-D-ribose 1-phosphate: step 1/6. Its function is as follows. Catalyzes the interconversion of methylthioribose-1-phosphate (MTR-1-P) into methylthioribulose-1-phosphate (MTRu-1-P). The protein is Methylthioribose-1-phosphate isomerase of Thermoanaerobacter pseudethanolicus (strain ATCC 33223 / 39E) (Clostridium thermohydrosulfuricum).